The primary structure comprises 208 residues: MIVIIDYDTGNTKSISKALDFIGLQNKISSDKTEIAQADGVILPGVGAYPEAMQELTRRGLDKTLKEIATAGKPILGVCLGMQLLLESSNEHSYTKGLGLIPGHVEMLPDESEFAVPHMGWNQLQIKRTTPLTQNIAGEYVYYVHSYYANCPEAYIIATSGYSIDIPGMINNGNIYGAQFHPEKSGQIGLEILKGFKEVIRSCKSSQQ.

A Glutamine amidotransferase type-1 domain is found at 1 to 206; sequence MIVIIDYDTG…KEVIRSCKSS (206 aa). Cys79 serves as the catalytic Nucleophile. Catalysis depends on residues His181 and Glu183.

As to quaternary structure, heterodimer of HisH and HisF.

It is found in the cytoplasm. It catalyses the reaction 5-[(5-phospho-1-deoxy-D-ribulos-1-ylimino)methylamino]-1-(5-phospho-beta-D-ribosyl)imidazole-4-carboxamide + L-glutamine = D-erythro-1-(imidazol-4-yl)glycerol 3-phosphate + 5-amino-1-(5-phospho-beta-D-ribosyl)imidazole-4-carboxamide + L-glutamate + H(+). The enzyme catalyses L-glutamine + H2O = L-glutamate + NH4(+). Its pathway is amino-acid biosynthesis; L-histidine biosynthesis; L-histidine from 5-phospho-alpha-D-ribose 1-diphosphate: step 5/9. In terms of biological role, IGPS catalyzes the conversion of PRFAR and glutamine to IGP, AICAR and glutamate. The HisH subunit catalyzes the hydrolysis of glutamine to glutamate and ammonia as part of the synthesis of IGP and AICAR. The resulting ammonia molecule is channeled to the active site of HisF. The sequence is that of Imidazole glycerol phosphate synthase subunit HisH from Listeria monocytogenes serotype 4b (strain CLIP80459).